Reading from the N-terminus, the 989-residue chain is MTMAGGRRGLVAPQNTFLENIVRRSNDTNFVLGNAQIVDWPIVYSNDGFCKLSGYHRAEVMQKSSTCSFMYGELTDKDTIEKVRQTFENYEMNSFEILMYKKNRTPVWFFVKIAPIRNEQDKVVLFLCTFSDITAFKQPIEDDSCKGWGKFARLTRALTSSRGVLQQLAPSVQKGENVHKHSRLAEVLQLGSDILPQYKQEAPKTPPHIILHYCVFKTTWDWIILILTFYTAILVPYNVSFKTRQNNVAWLVVDSIVDVIFLVDIVLNFHTTFVGPAGEVISDPKLIRMNYLKTWFVIDLLSCLPYDVINAFENVDEVSAFMGDPGKIGFADQIPPPLEGRESQGISSLFSSLKVVRLLRLGRVARKLDHYIEYGAAVLVLLVCVFGLAAHWMACIWYSIGDYEIFDEDTKTIRNNSWLYQLAMDIGTPYQFNGSGSGKWEGGPSKNSVYISSLYFTMTSLTSVGFGNIAPSTDIEKIFAVAIMMIGSLLYATIFGNVTTIFQQMYANTNRYHEMLNSVRDFLKLYQVPKGLSERVMDYIVSTWSMSRGIDTEKVLQICPKDMRADICVHLNRKVFKEHPAFRLASDGCLRALAMEFQTVHCAPGDLIYHAGESVDSLCFVVSGSLEVIQDDEVVAILGKGDVFGDVFWKEATLAQSCANVRALTYCDLHVIKRDALQKVLEFYTAFSHSFSRNLILTYNLRKRIVFRKISDVKREEEERMKRKNEAPLILPPDHPVRRLFQRFRQQKEARLAAERGGRDLDDLDVEKGNVLTEHASANHSLVKASVVTVRESPATPVSFQAASTSGVPDHAKLQAPGSECLGPKGGGGDCAKRKSWARFKDACGKSEDWNKVSKAESMETLPERTKASGEATLKKTDSCDSGITKSDLRLDNVGEARSPQDRSPILAEVKHSFYPIPEQTLQATVLEVRHELKEDIKALNAKMTNIEKQLSEILRILTSRRSSQSPQELFEISRPQSPESERDIFGAS.

Topologically, residues 1–220 (MTMAGGRRGL…LHYCVFKTTW (220 aa)) are cytoplasmic. The region spanning 14 to 94 (QNTFLENIVR…QTFENYEMNS (81 aa)) is the PAS domain. The 53-residue stretch at 93-145 (NSFEILMYKKNRTPVWFFVKIAPIRNEQDKVVLFLCTFSDITAFKQPIEDDSC) folds into the PAC domain. Residues 151–162 (FARLTRALTSSR) are required for phosphatidylinositol bisphosphate binding. The helical transmembrane segment at 221–241 (DWIILILTFYTAILVPYNVSF) threads the bilayer. Residues 242 to 248 (KTRQNNV) are Extracellular-facing. A helical membrane pass occupies residues 249–269 (AWLVVDSIVDVIFLVDIVLNF). The Cytoplasmic portion of the chain corresponds to 270-290 (HTTFVGPAGEVISDPKLIRMN). The helical transmembrane segment at 291–309 (YLKTWFVIDLLSCLPYDVI) threads the bilayer. At 310–345 (NAFENVDEVSAFMGDPGKIGFADQIPPPLEGRESQG) the chain is on the extracellular side. The helical; Voltage-sensor transmembrane segment at 346–368 (ISSLFSSLKVVRLLRLGRVARKL) threads the bilayer. At 369 to 377 (DHYIEYGAA) the chain is on the cytoplasmic side. Residues 378 to 399 (VLVLLVCVFGLAAHWMACIWYS) form a helical membrane-spanning segment. At 400–448 (IGDYEIFDEDTKTIRNNSWLYQLAMDIGTPYQFNGSGSGKWEGGPSKNS) the chain is on the extracellular side. 2 N-linked (GlcNAc...) asparagine glycosylation sites follow: asparagine 415 and asparagine 433. An intramembrane region (pore-forming) is located at residues 449–470 (VYISSLYFTMTSLTSVGFGNIA). Positions 463–468 (SVGFGN) match the Selectivity filter motif. The Extracellular segment spans residues 471-477 (PSTDIEK). A helical membrane pass occupies residues 478–498 (IFAVAIMMIGSLLYATIFGNV). Over 499–989 (TTIFQQMYAN…ESERDIFGAS (491 aa)) the chain is Cytoplasmic. The segment at 673–770 (KRDALQKVLE…LDDLDVEKGN (98 aa)) is calmodulin-binding. The interaction with cyclic nucleotide-binding pocket stretch occupies residues 699-701 (YNL). Basic and acidic residues predominate over residues 855–879 (KAESMETLPERTKASGEATLKKTDS). Disordered stretches follow at residues 855 to 886 (KAES…GITK) and 962 to 989 (RSSQ…FGAS). Positions 924–964 (ATVLEVRHELKEDIKALNAKMTNIEKQLSEILRILTSRRSS) are CAD (involved in subunit assembly). Phosphoserine is present on residues serine 974, serine 978, and serine 981. Residues 980–989 (ESERDIFGAS) are compositionally biased toward basic and acidic residues.

It belongs to the potassium channel family. H (Eag) (TC 1.A.1.20) subfamily. Kv10.1/KCNH1 sub-subfamily. Homomultimer. The potassium channel is composed of a homo- or heterotetrameric complex of pore-forming alpha subunits that can associate with modulating beta subunits. Heteromultimer with KCNH5/EAG2. Interacts with ALG10B. Interacts with RABEP1. Interacts (via C-terminus) with CTTN. Interacts (via C-terminal cytoplasmic region) with Ca(2+)-bound calmodulin. Interacts with the spider kappa-theraphotoxin-Aa1a and mu/kappa-theraphotoxin-Ap1a. Channel activity is regulated via tyrosine phosphorylation/dephosphorylation by SRC and PTPN6. As to expression, highly expressed in brain and in myoblasts at the onset of fusion, but not in other tissues. Detected in HeLa (cervical carcinoma), SH-SY5Y (neuroblastoma) and MCF-7 (epithelial tumor) cells, but not in normal epithelial cells.

It is found in the cell membrane. The protein localises to the nucleus inner membrane. Its subcellular location is the cell projection. The protein resides in the dendrite. It localises to the axon. It is found in the presynaptic cell membrane. The protein localises to the perikaryon. Its subcellular location is the postsynaptic density membrane. The protein resides in the early endosome membrane. The enzyme catalyses K(+)(in) = K(+)(out). Its activity is regulated as follows. Channel activity is inhibited by interaction with Ca(2+)-bound calmodulin. Interaction of a single pore-forming alpha subunit with a calmodulin chain is sufficient to promote channel closure. Channel activity is not regulated by cyclic nucleotides. Channel activity is inhibited by binding intracellular phosphatidylinositol-3,5-bisphosphate and phosphatidylinositol-4,5-bisphosphate (PIP2), but is not inhibited by phosphatidylinositol 4-phosphate. Inhibited by the spider kappa-theraphotoxin-Aa1a and mu/kappa-theraphotoxin-Ap1a. Pore-forming (alpha) subunit of a voltage-gated delayed rectifier potassium channel that mediates outward-rectifying potassium currents which, on depolarization, reaches a steady-state level and do not inactivate. The activation kinetics depend on the prepulse potential and external divalent cation concentration. With negative prepulses, the current activation is delayed and slowed down several fold, whereas more positive prepulses speed up activation. The time course of activation is biphasic with a fast and a slowly activating current component. Activates at more positive membrane potentials and exhibit a steeper activation curve. Channel properties are modulated by subunit assembly. Mediates IK(NI) current in myoblasts. Involved in the regulation of cell proliferation and differentiation, in particular adipogenic and osteogenic differentiation in bone marrow-derived mesenchymal stem cells (MSCs). The polypeptide is Voltage-gated delayed rectifier potassium channel KCNH1 (Homo sapiens (Human)).